A 359-amino-acid polypeptide reads, in one-letter code: N-acetyl-gamma-glutamyl-phosphate reductase (359 aa).

Residue cysteine 162 is part of the active site.

It belongs to the NAGSA dehydrogenase family. Type 1 subfamily.

Its subcellular location is the cytoplasm. The catalysed reaction is N-acetyl-L-glutamate 5-semialdehyde + phosphate + NADP(+) = N-acetyl-L-glutamyl 5-phosphate + NADPH + H(+). It functions in the pathway amino-acid biosynthesis; L-arginine biosynthesis; N(2)-acetyl-L-ornithine from L-glutamate: step 3/4. In terms of biological role, catalyzes the NADPH-dependent reduction of N-acetyl-5-glutamyl phosphate to yield N-acetyl-L-glutamate 5-semialdehyde. This chain is N-acetyl-gamma-glutamyl-phosphate reductase, found in Prochlorococcus marinus (strain NATL2A).